The chain runs to 406 residues: Digeranylgeranylglycerophospholipid reductase 2 (406 aa).

Residues Gly15, Glu34, Cys45, Ala46, Gly48, Arg99, Ala123, Asp279, Gly291, and Ile292 each coordinate FAD.

The protein belongs to the geranylgeranyl reductase family. DGGGPL reductase subfamily. The cofactor is FAD.

It catalyses the reaction a 2,3-bis-O-phytanyl-sn-glycerol 1-phospholipid + 8 oxidized 2[4Fe-4S]-[ferredoxin] = a 2,3-bis-O-(geranylgeranyl)-sn-glycerol 1-phospholipid + 8 reduced 2[4Fe-4S]-[ferredoxin] + 16 H(+). The enzyme catalyses 2,3-bis-O-(phytanyl)-sn-glycerol 1-phosphate + 8 oxidized 2[4Fe-4S]-[ferredoxin] = 2,3-bis-O-(geranylgeranyl)-sn-glycerol 1-phosphate + 8 reduced 2[4Fe-4S]-[ferredoxin] + 16 H(+). The catalysed reaction is a 2,3-bis-O-phytanyl-sn-glycerol 1-phospholipid + 8 A = a 2,3-bis-O-(geranylgeranyl)-sn-glycerol 1-phospholipid + 8 AH2. It carries out the reaction CDP-2,3-bis-O-(geranylgeranyl)-sn-glycerol + 8 AH2 = CDP-2,3-bis-O-(phytanyl)-sn-glycerol + 8 A. It catalyses the reaction archaetidylserine + 8 AH2 = 2,3-bis-O-phytanyl-sn-glycero-3-phospho-L-serine + 8 A. The protein operates within membrane lipid metabolism; glycerophospholipid metabolism. Functionally, is involved in the reduction of 2,3-digeranylgeranylglycerophospholipids (unsaturated archaeols) into 2,3-diphytanylglycerophospholipids (saturated archaeols) in the biosynthesis of archaeal membrane lipids. Catalyzes the formation of archaetidic acid (2,3-di-O-phytanyl-sn-glyceryl phosphate) from 2,3-di-O-geranylgeranylglyceryl phosphate (DGGGP) via the hydrogenation of each double bond of the isoprenoid chains. Is also probably able to reduce double bonds of geranyl groups in CDP-2,3-bis-O-(geranylgeranyl)-sn-glycerol and archaetidylserine, thus acting at various stages in the biosynthesis of archaeal membrane lipids. This Methanococcoides burtonii (strain DSM 6242 / NBRC 107633 / OCM 468 / ACE-M) protein is Digeranylgeranylglycerophospholipid reductase 2.